The sequence spans 330 residues: (11Z)-hexadec-11-enoyl-CoA conjugase (330 aa).

Helical transmembrane passes span Ile-37–Tyr-57 and Leu-65–Gly-85. The Histidine box-1 signature appears at His-87–His-92. A helical transmembrane segment spans residues Leu-101–Val-121. The Histidine box-2 motif lies at His-124–His-128. 2 helical membrane passes run Ala-185–Trp-205 and Thr-216–Gly-238. The Histidine box-3 signature appears at His-264–His-268.

The protein belongs to the fatty acid desaturase type 1 family. Fe(2+) is required as a cofactor. In terms of tissue distribution, highly expressed in the pheromone gland.

It localises to the membrane. The enzyme catalyses an 11,12-saturated fatty acyl-CoA + 2 Fe(II)-[cytochrome b5] + O2 + 2 H(+) = an (11Z)-Delta(11)-fatty acyl-CoA + 2 Fe(III)-[cytochrome b5] + 2 H2O. It carries out the reaction (11Z)-hexadecenoyl-CoA + AH2 + O2 = (10E,12Z)-hexadecadienoyl-CoA + A + 2 H2O. Its function is as follows. Fatty acid desaturase that catalyzes 2 consecutive steps in the biosynthesis of bombykol, a sex pheromone produced by the moth. First acts as an acyl-CoA Delta(11) desaturase (1) by catalyzing the formation of Delta(11) fatty acyl precursors. Then acts as a (11Z)-hexadec-11-enoyl-CoA conjugase (2) by converting a single cis double bond at position 11 of (11Z)-hexadec-11-enoyl-CoA into conjugated 10 trans and 12 cis double bonds. This is (11Z)-hexadec-11-enoyl-CoA conjugase from Bombyx mori (Silk moth).